The chain runs to 243 residues: UDP-2,3-diacylglucosamine hydrolase (243 aa).

Residues Asp8, His10, Asp41, Asn79, and His114 each contribute to the Mn(2+) site. 79-80 (NR) provides a ligand contact to substrate. The substrate site is built by Asp122, Lys164, Lys167, and His195. 2 residues coordinate Mn(2+): His195 and His197.

This sequence belongs to the LpxH family. Mn(2+) serves as cofactor.

It localises to the cell inner membrane. The catalysed reaction is UDP-2-N,3-O-bis[(3R)-3-hydroxytetradecanoyl]-alpha-D-glucosamine + H2O = 2-N,3-O-bis[(3R)-3-hydroxytetradecanoyl]-alpha-D-glucosaminyl 1-phosphate + UMP + 2 H(+). Its pathway is glycolipid biosynthesis; lipid IV(A) biosynthesis; lipid IV(A) from (3R)-3-hydroxytetradecanoyl-[acyl-carrier-protein] and UDP-N-acetyl-alpha-D-glucosamine: step 4/6. Functionally, hydrolyzes the pyrophosphate bond of UDP-2,3-diacylglucosamine to yield 2,3-diacylglucosamine 1-phosphate (lipid X) and UMP by catalyzing the attack of water at the alpha-P atom. Involved in the biosynthesis of lipid A, a phosphorylated glycolipid that anchors the lipopolysaccharide to the outer membrane of the cell. The sequence is that of UDP-2,3-diacylglucosamine hydrolase from Vibrio vulnificus (strain YJ016).